The primary structure comprises 975 residues: Glycine dehydrogenase (decarboxylating) (975 aa).

At Lys-723 the chain carries N6-(pyridoxal phosphate)lysine.

The protein belongs to the GcvP family. The glycine cleavage system is composed of four proteins: P, T, L and H. Pyridoxal 5'-phosphate is required as a cofactor.

It catalyses the reaction N(6)-[(R)-lipoyl]-L-lysyl-[glycine-cleavage complex H protein] + glycine + H(+) = N(6)-[(R)-S(8)-aminomethyldihydrolipoyl]-L-lysyl-[glycine-cleavage complex H protein] + CO2. Functionally, the glycine cleavage system catalyzes the degradation of glycine. The P protein binds the alpha-amino group of glycine through its pyridoxal phosphate cofactor; CO(2) is released and the remaining methylamine moiety is then transferred to the lipoamide cofactor of the H protein. The chain is Glycine dehydrogenase (decarboxylating) from Burkholderia cenocepacia (strain HI2424).